Here is a 281-residue protein sequence, read N- to C-terminus: Translation initiation factor IF3-4, chloroplastic (281 aa).

The transit peptide at 1 to 51 (MAGITSTVGFNAILAGATKTVSHPVKSKLFGLRLCVPEFSIVSLSPYHHRR) directs the protein to the chloroplast. Disordered stretches follow at residues 63–86 (GGGGSRFPGDRRGRQKESEDDDSL) and 253–281 (KVQEPPPKKKKKPADDKVSAANITATQDI). 2 stretches are compositionally biased toward basic and acidic residues: residues 70 to 79 (PGDRRGRQKE) and 253 to 270 (KVQEPPPKKKKKPADDKV).

It belongs to the IF-3 family. As to quaternary structure, monomer.

It localises to the plastid. The protein localises to the chloroplast. In terms of biological role, chloroplast translation initiation factor that is essential for the coordination of leaf and chloroplast development. IF-3 binds to the 30S ribosomal subunit and shifts the equilibrium between 70S ribosomes and their 50S and 30S subunits in favor of the free subunits, thus enhancing the availability of 30S subunits on which protein synthesis initiation begins. This chain is Translation initiation factor IF3-4, chloroplastic, found in Arabidopsis thaliana (Mouse-ear cress).